The sequence spans 397 residues: NADH-quinone oxidoreductase subunit D (397 aa).

The protein belongs to the complex I 49 kDa subunit family. As to quaternary structure, NDH-1 is composed of 14 different subunits. Subunits NuoB, C, D, E, F, and G constitute the peripheral sector of the complex.

The protein resides in the cell inner membrane. The enzyme catalyses a quinone + NADH + 5 H(+)(in) = a quinol + NAD(+) + 4 H(+)(out). Functionally, NDH-1 shuttles electrons from NADH, via FMN and iron-sulfur (Fe-S) centers, to quinones in the respiratory chain. The immediate electron acceptor for the enzyme in this species is believed to be ubiquinone. Couples the redox reaction to proton translocation (for every two electrons transferred, four hydrogen ions are translocated across the cytoplasmic membrane), and thus conserves the redox energy in a proton gradient. This chain is NADH-quinone oxidoreductase subunit D, found in Magnetococcus marinus (strain ATCC BAA-1437 / JCM 17883 / MC-1).